The chain runs to 466 residues: Ribulose bisphosphate carboxylase large chain (466 aa).

N6,N6,N6-trimethyllysine is present on Lys5. Residues Asn114 and Thr164 each contribute to the substrate site. Lys166 acts as the Proton acceptor in catalysis. A substrate-binding site is contributed by Lys168. Lys192, Asp194, and Glu195 together coordinate Mg(2+). Lys192 is subject to N6-carboxylysine. Catalysis depends on His285, which acts as the Proton acceptor. Arg286, His318, and Ser370 together coordinate substrate.

The protein belongs to the RuBisCO large chain family. Type I subfamily. As to quaternary structure, heterohexadecamer of 8 large chains and 8 small chains; disulfide-linked. The disulfide link is formed within the large subunit homodimers. Mg(2+) serves as cofactor. Post-translationally, the disulfide bond which can form in the large chain dimeric partners within the hexadecamer appears to be associated with oxidative stress and protein turnover.

The protein localises to the plastid. It is found in the chloroplast. The enzyme catalyses 2 (2R)-3-phosphoglycerate + 2 H(+) = D-ribulose 1,5-bisphosphate + CO2 + H2O. It catalyses the reaction D-ribulose 1,5-bisphosphate + O2 = 2-phosphoglycolate + (2R)-3-phosphoglycerate + 2 H(+). In terms of biological role, ruBisCO catalyzes two reactions: the carboxylation of D-ribulose 1,5-bisphosphate, the primary event in carbon dioxide fixation, as well as the oxidative fragmentation of the pentose substrate in the photorespiration process. Both reactions occur simultaneously and in competition at the same active site. This is Ribulose bisphosphate carboxylase large chain from Drosera filiformis (Thread-leaved sundew).